Here is a 213-residue protein sequence, read N- to C-terminus: Superoxide dismutase [Mn] (213 aa).

Mn(2+) contacts are provided by His27, His82, Asp168, and His172.

The protein belongs to the iron/manganese superoxide dismutase family. Homodimer.

It catalyses the reaction 2 superoxide + 2 H(+) = H2O2 + O2. Its activity is regulated as follows. Inhibited by hydrogen peroxide. In terms of biological role, destroys superoxide anion radicals which are normally produced within the cells and which are toxic to biological systems. The chain is Superoxide dismutase [Mn] (sodA) from Haemophilus ducreyi (strain 35000HP / ATCC 700724).